Here is a 471-residue protein sequence, read N- to C-terminus: Iroquois-class homeodomain protein IRX-2 (471 aa).

The segment at residues 112 to 175 is a DNA-binding region (homeobox; TALE-type); that stretch reads LNDPAYRKNA…ANARRRLKKE (64 aa). Disordered stretches follow at residues 176-373 and 424-471; these read NKMT…SPYP and APKA…QPYL. A Phosphoserine modification is found at Ser186. The segment covering 195-209 has biased composition (basic and acidic residues); the sequence is DATRSKDESPDKAQE. Over residues 261–273 the composition is skewed to acidic residues; that stretch reads DDLEDDEDDDEEG. The segment covering 355–367 has biased composition (low complexity); that stretch reads PAAAAPASTGAPP. Positions 462–471 are enriched in gly residues; the sequence is VVGGGVQPYL.

Belongs to the TALE/IRO homeobox family.

It is found in the nucleus. The protein is Iroquois-class homeodomain protein IRX-2 (IRX2) of Homo sapiens (Human).